We begin with the raw amino-acid sequence, 570 residues long: Pyruvate decarboxylase (570 aa).

Residues 1-2 (MV) constitute a propeptide, removed in mature form. Substrate is bound by residues D33 and H120. The tract at residues 394 to 476 (DSWFNGIQLK…MLINNRGYTI (83 aa)) is thiamine pyrophosphate binding. Mg(2+) is bound by residues D444, N471, and G473. Position 477 (E477) interacts with substrate.

Belongs to the TPP enzyme family. Homomer. The cofactor is a metal cation. Thiamine diphosphate serves as cofactor.

The protein localises to the cytoplasm. It catalyses the reaction a 2-oxocarboxylate + H(+) = an aldehyde + CO2. The protein operates within carbohydrate metabolism; pyruvate metabolism. The chain is Pyruvate decarboxylase (cfp) from Neurospora crassa (strain ATCC 24698 / 74-OR23-1A / CBS 708.71 / DSM 1257 / FGSC 987).